The sequence spans 58 residues: UPF0391 membrane protein COXBURSA331_A2131 (58 aa).

2 helical membrane-spanning segments follow: residues 3-23 and 30-50; these read FWVLIFFIIAVIAALFGFTGI and IAKILFFIFLVLFVISLIAML.

This sequence belongs to the UPF0391 family.

Its subcellular location is the cell membrane. The sequence is that of UPF0391 membrane protein COXBURSA331_A2131 from Coxiella burnetii (strain RSA 331 / Henzerling II).